A 287-amino-acid chain; its full sequence is ATP synthase gamma chain (287 aa).

It belongs to the ATPase gamma chain family. As to quaternary structure, F-type ATPases have 2 components, CF(1) - the catalytic core - and CF(0) - the membrane proton channel. CF(1) has five subunits: alpha(3), beta(3), gamma(1), delta(1), epsilon(1). CF(0) has three main subunits: a, b and c.

The protein localises to the cell inner membrane. In terms of biological role, produces ATP from ADP in the presence of a proton gradient across the membrane. The gamma chain is believed to be important in regulating ATPase activity and the flow of protons through the CF(0) complex. In Stenotrophomonas maltophilia (strain R551-3), this protein is ATP synthase gamma chain.